The sequence spans 246 residues: Sensory transduction protein LytT (246 aa).

One can recognise a Response regulatory domain in the interval 4-120 (HIMIAEDERL…RFKIAMNRIR (117 aa)). A 4-aspartylphosphate modification is found at aspartate 55. Residues 136–243 (LVVNLDEKMM…AKGLFDALQG (108 aa)) form the HTH LytTR-type domain.

Phosphorylated by LytS.

The protein localises to the cytoplasm. Functionally, member of the two-component regulatory system LytS/LytT that probably regulates genes involved in cell wall metabolism. In Oceanobacillus iheyensis (strain DSM 14371 / CIP 107618 / JCM 11309 / KCTC 3954 / HTE831), this protein is Sensory transduction protein LytT (lytT).